Reading from the N-terminus, the 132-residue chain is Fatty acid-binding protein, intestinal (132 aa).

The residue at position 2 (Ala2) is an N-acetylalanine. Positions 83 and 107 each coordinate hexadecanoate. Tetradecanoate contacts are provided by Trp83 and Arg107.

The protein belongs to the calycin superfamily. Fatty-acid binding protein (FABP) family. In terms of tissue distribution, expressed in the small intestine and at much lower levels in the large intestine. Highest expression levels in the jejunum.

It is found in the cytoplasm. Its function is as follows. FABPs are thought to play a role in the intracellular transport of long-chain fatty acids and their acyl-CoA esters. FABP2 is probably involved in triglyceride-rich lipoprotein synthesis. Binds saturated long-chain fatty acids with a high affinity, but binds with a lower affinity to unsaturated long-chain fatty acids. FABP2 may also help maintain energy homeostasis by functioning as a lipid sensor. This chain is Fatty acid-binding protein, intestinal (FABP2), found in Homo sapiens (Human).